We begin with the raw amino-acid sequence, 3394 residues long: Protein PFC0760c (3394 aa).

Composition is skewed to low complexity over residues 471–508 (NNND…NYNN), 515–528 (NMNS…NNLH), and 786–841 (NNQN…NQNN). Disordered regions lie at residues 471–539 (NNND…DENN), 779–844 (MSSN…NAGI), 1038–1099 (NKKK…NNDD), 1892–1918 (TTTT…NNND), 2648–2693 (KMDL…DNHL), 2835–2909 (AKNE…NSNN), 3000–3057 (VSVG…DVNT), and 3107–3394 (DYVN…NSEE). The span at 1038–1097 (NKKKNNDGDNKSQEDDDGNKKKNNDGDNKSQEDDDGNKKKNNDGDNKSQEDDYGNKKKNN) shows a compositional bias: basic and acidic residues. Over residues 2657–2671 (GDDDDDDDDDDDDDN) the composition is skewed to acidic residues. The segment covering 2672–2686 (NNNNNNNNNNNNNNM) has biased composition (low complexity). A compositionally biased stretch (polar residues) spans 2836-2846 (KNENYPVSTHY). 2 stretches are compositionally biased toward low complexity: residues 2855–2865 (DNINNDNNNDN) and 2872–2909 (NDNI…NSNN). Composition is skewed to acidic residues over residues 3007–3047 (DNND…EEKE) and 3147–3257 (DDDE…DDND). Over residues 3258–3292 (NDHNDDNNDEEKYSCHDDKNEHTNNDLLNIDHDNN) the composition is skewed to basic and acidic residues. Over residues 3300–3309 (LYSTYNVSVS) the composition is skewed to polar residues. Positions 3310 to 3320 (HNKDPSNKENE) are enriched in basic and acidic residues. A compositionally biased stretch (polar residues) spans 3321 to 3330 (IQNLISIDSS). Residues 3331–3379 (NENDENDENDENDENDENDENDENDENDENDENDEKDENDENDENDENF) are compositionally biased toward acidic residues. The segment covering 3385–3394 (GTLNEMNSEE) has biased composition (polar residues).

This chain is Protein PFC0760c, found in Plasmodium falciparum (isolate 3D7).